The sequence spans 507 residues: Maturase K (507 aa).

This sequence belongs to the intron maturase 2 family. MatK subfamily.

It localises to the plastid. It is found in the chloroplast. In terms of biological role, usually encoded in the trnK tRNA gene intron. Probably assists in splicing its own and other chloroplast group II introns. In Robinia pseudoacacia (Black locust), this protein is Maturase K.